Reading from the N-terminus, the 298-residue chain is 1,2-dihydroxynaphthalene dioxygenase (298 aa).

VOC domains follow at residues 6 to 121 (ELGY…IFYG) and 146 to 267 (GIGH…FGWG). A Fe cation-binding site is contributed by His-149. Substrate is bound by residues His-149, 196-197 (QH), His-212, and Tyr-253. His-212 is a Fe cation binding site. Residue Glu-263 coordinates Fe cation.

This sequence belongs to the extradiol ring-cleavage dioxygenase family. As to quaternary structure, homooctamer. Fe(2+) serves as cofactor.

It catalyses the reaction naphthalene-1,2-diol + O2 = 2-hydroxychromene-2-carboxylate + H(+). Its pathway is aromatic compound metabolism; naphthalene degradation. Its function is as follows. Involved in the naphthalene and naphthalenesulfonate catabolic pathway. Catalyzes the meta-cleavage of 1,2-dihydroxynaphthalene (1,2-DHN) to yield 2-hydroxychromene-2-carboxylic acid. Can also cleave 1,2,5-trihydroxynaphthalene (1,2,5-THN), 1,2,6-trihydroxynaphthalene (1,2,6-THN), 1,2,7-trihydroxynaphthalene (1,2,7-THN), 2,3-dihydroxybiphenyl, 3,4-dihydroxybiphenyl, catechol, 3-methylcatechol and 4-methylcatechol. This is 1,2-dihydroxynaphthalene dioxygenase (nsaC) from Sphingobium xenophagum.